We begin with the raw amino-acid sequence, 191 residues long: Bcl-2-like protein 10 (191 aa).

Positions 79 to 98 (LSKDQDFSWSQLVMLLAFAG) match the BH1 motif. Lys112 is covalently cross-linked (Glycyl lysine isopeptide (Lys-Gly) (interchain with G-Cter in ubiquitin)). The BH2 signature appears at 144–155 (RLEALGGWDGFC). The helical transmembrane segment at 166–183 (FWRRLLIQAFLSGFFATA) threads the bilayer.

Belongs to the Bcl-2 family. As to quaternary structure, interacts with BAX. Interacts with BCL2 and BCL2L1/BCLX. Interacts with APAF1. Interacts with ITPR1, ITPR2 and ITPR3; the interaction with ITPR1 is increased in the presence of AHCLY1. Interacts with AHCYL1. Interacts with HIP1R (via ENTH and I/LWEQ domains). Interacts with CASP9. Interacts with BCL2L11/BIM. Interacts with BIK. Interacts with UBQLN4. Interacts with NME2/NM23-H2. Interacts with PMAIP1/NOXA. Interacts with TPX2. Interacts with UBQLN1; in the cytoplasm. Interacts (via BH1 domain) with BECN1. The cofactor is Ca(2+). Monoubiquitinated by UBQLN1; results in stabilization of BCL2L10 protein abundance and in relocalization from mitochondria to cytoplasm. In terms of tissue distribution, expressed in multiple embryonic tissues. Restricted to the ovary and testis in adult mice.

It localises to the mitochondrion. The protein resides in the nucleus membrane. It is found in the endoplasmic reticulum. Its subcellular location is the cytoplasm. The protein localises to the cytoskeleton. It localises to the spindle. Promotes cell survival by suppressing apoptosis induced by BAX but not BAK. Increases binding of AHCYL1/IRBIT to ITPR1. Reduces ITPR1-mediated calcium release from the endoplasmic reticulum cooperatively with AHCYL1/IRBIT under normal cellular conditions. Under apoptotic stress conditions, dissociates from ITPR1 and is displaced from mitochondria-associated endoplasmic reticulum membranes, leading to increased Ca(2+) transfer to mitochondria which promotes apoptosis. Required for the correct formation of the microtubule organizing center during oocyte cell division, potentially via regulation of protein abundance and localization of other microtubule organizing center components such as AURKA and TPX2. This chain is Bcl-2-like protein 10, found in Mus musculus (Mouse).